The chain runs to 105 residues: Small ribosomal subunit protein uS10 (105 aa).

Belongs to the universal ribosomal protein uS10 family. As to quaternary structure, part of the 30S ribosomal subunit.

In terms of biological role, involved in the binding of tRNA to the ribosomes. The chain is Small ribosomal subunit protein uS10 from Maridesulfovibrio salexigens (strain ATCC 14822 / DSM 2638 / NCIMB 8403 / VKM B-1763) (Desulfovibrio salexigens).